We begin with the raw amino-acid sequence, 198 residues long: Recombination protein RecR (198 aa).

The segment at 56-71 adopts a C4-type zinc-finger fold; it reads CEICGNVSEQATCSIC. Positions 79–174 constitute a Toprim domain; it reads ALICVVEEAK…RVTRLASGLP (96 aa).

This sequence belongs to the RecR family.

In terms of biological role, may play a role in DNA repair. It seems to be involved in an RecBC-independent recombinational process of DNA repair. It may act with RecF and RecO. This is Recombination protein RecR from Leifsonia xyli subsp. xyli (strain CTCB07).